Consider the following 360-residue polypeptide: Phospho-N-acetylmuramoyl-pentapeptide-transferase (360 aa).

The next 10 membrane-spanning stretches (helical) occupy residues 25–45 (RGIL…PWMI), 73–93 (TMGG…WADL), 97–117 (YVWV…VDDY), 134–154 (YFWQ…TAPT), 168–188 (VTIP…VGSS), 199–219 (GLAI…CYLS), 236–256 (SGEL…FLWF), 263–283 (VFMG…IAVI), 288–308 (IVLF…VIQV), and 338–358 (VIVR…ATLK).

It belongs to the glycosyltransferase 4 family. MraY subfamily. The cofactor is Mg(2+).

It localises to the cell inner membrane. The enzyme catalyses UDP-N-acetyl-alpha-D-muramoyl-L-alanyl-gamma-D-glutamyl-meso-2,6-diaminopimeloyl-D-alanyl-D-alanine + di-trans,octa-cis-undecaprenyl phosphate = di-trans,octa-cis-undecaprenyl diphospho-N-acetyl-alpha-D-muramoyl-L-alanyl-D-glutamyl-meso-2,6-diaminopimeloyl-D-alanyl-D-alanine + UMP. It functions in the pathway cell wall biogenesis; peptidoglycan biosynthesis. Its function is as follows. Catalyzes the initial step of the lipid cycle reactions in the biosynthesis of the cell wall peptidoglycan: transfers peptidoglycan precursor phospho-MurNAc-pentapeptide from UDP-MurNAc-pentapeptide onto the lipid carrier undecaprenyl phosphate, yielding undecaprenyl-pyrophosphoryl-MurNAc-pentapeptide, known as lipid I. This Pseudomonas putida (strain ATCC 700007 / DSM 6899 / JCM 31910 / BCRC 17059 / LMG 24140 / F1) protein is Phospho-N-acetylmuramoyl-pentapeptide-transferase.